We begin with the raw amino-acid sequence, 729 residues long: DNA topoisomerase 3 (729 aa).

Residues 3-136 enclose the Toprim domain; sequence KSVVIAEKPS…IKRLWISSVT (134 aa). Mg(2+)-binding residues include Glu-9 and Asp-105. The Topo IA-type catalytic domain occupies 153 to 594; that stretch reads YDNLYASAVA…EMKNYTKEIV (442 aa). Residues 187–192 form an interaction with DNA region; the sequence is NCGRVQ. Residue Tyr-310 is the O-(5'-phospho-DNA)-tyrosine intermediate of the active site. Basic and acidic residues predominate over residues 686-713; sequence ERRKKESGNKADKRDVQKYMKQQKKEEE. A disordered region spans residues 686–718; that stretch reads ERRKKESGNKADKRDVQKYMKQQKKEEEPLNNP.

Belongs to the type IA topoisomerase family. Mg(2+) serves as cofactor.

It carries out the reaction ATP-independent breakage of single-stranded DNA, followed by passage and rejoining.. Functionally, releases the supercoiling and torsional tension of DNA, which is introduced during the DNA replication and transcription, by transiently cleaving and rejoining one strand of the DNA duplex. Introduces a single-strand break via transesterification at a target site in duplex DNA. The scissile phosphodiester is attacked by the catalytic tyrosine of the enzyme, resulting in the formation of a DNA-(5'-phosphotyrosyl)-enzyme intermediate and the expulsion of a 3'-OH DNA strand. The free DNA strand then undergoes passage around the unbroken strand, thus removing DNA supercoils. Finally, in the religation step, the DNA 3'-OH attacks the covalent intermediate to expel the active-site tyrosine and restore the DNA phosphodiester backbone. The polypeptide is DNA topoisomerase 3 (Bacillus thuringiensis subsp. konkukian (strain 97-27)).